Reading from the N-terminus, the 585-residue chain is CTP synthase (585 aa).

Residues 1-281 (MPALRKHPHT…DAYVVRRLNL (281 aa)) are amidoligase domain. Residue Ser23 participates in CTP binding. Ser23 is a binding site for UTP. ATP is bound by residues 24-29 (SLGKGL) and Asp81. Residues Asp81 and Glu155 each contribute to the Mg(2+) site. CTP-binding positions include 162-164 (DIE), 202-207 (KTKPTQ), and Lys238. Residues 202–207 (KTKPTQ) and Lys238 each bind UTP. The region spanning 306–554 (RIALVGKYID…VGAAVEYNNG (249 aa)) is the Glutamine amidotransferase type-1 domain. An L-glutamine-binding site is contributed by Gly369. Cys396 serves as the catalytic Nucleophile; for glutamine hydrolysis. Residues 397–400 (LGLQ), Glu419, and Arg480 each bind L-glutamine. Residues His527 and Glu529 contribute to the active site. The disordered stretch occupies residues 564 to 585 (IPTADHQSNGAEHALEDAPARG). The span at 576–585 (HALEDAPARG) shows a compositional bias: basic and acidic residues.

This sequence belongs to the CTP synthase family. As to quaternary structure, homotetramer.

It catalyses the reaction UTP + L-glutamine + ATP + H2O = CTP + L-glutamate + ADP + phosphate + 2 H(+). The catalysed reaction is L-glutamine + H2O = L-glutamate + NH4(+). It carries out the reaction UTP + NH4(+) + ATP = CTP + ADP + phosphate + 2 H(+). The protein operates within pyrimidine metabolism; CTP biosynthesis via de novo pathway; CTP from UDP: step 2/2. Allosterically activated by GTP, when glutamine is the substrate; GTP has no effect on the reaction when ammonia is the substrate. The allosteric effector GTP functions by stabilizing the protein conformation that binds the tetrahedral intermediate(s) formed during glutamine hydrolysis. Inhibited by the product CTP, via allosteric rather than competitive inhibition. In terms of biological role, catalyzes the ATP-dependent amination of UTP to CTP with either L-glutamine or ammonia as the source of nitrogen. Regulates intracellular CTP levels through interactions with the four ribonucleotide triphosphates. The protein is CTP synthase of Mycolicibacterium gilvum (strain PYR-GCK) (Mycobacterium gilvum (strain PYR-GCK)).